A 658-amino-acid chain; its full sequence is Glycogen debranching enzyme (658 aa).

Residue aspartate 336 is the Nucleophile of the active site. The active-site Proton donor is the glutamate 371. The segment at 459-484 (EANGEENRDGTNSNYSDNHGKEGLGG) is disordered.

Belongs to the glycosyl hydrolase 13 family.

The enzyme catalyses Hydrolysis of (1-&gt;6)-alpha-D-glucosidic linkages to branches with degrees of polymerization of three or four glucose residues in limit dextrin.. The protein operates within glycan degradation; glycogen degradation. Removes maltotriose and maltotetraose chains that are attached by 1,6-alpha-linkage to the limit dextrin main chain, generating a debranched limit dextrin. This Salmonella paratyphi B (strain ATCC BAA-1250 / SPB7) protein is Glycogen debranching enzyme.